The primary structure comprises 699 residues: Elongation factor G (699 aa).

The 276-residue stretch at 8–283 (EHIRNIGICA…AVVDFLPSPI (276 aa)) folds into the tr-type G domain. Residues 17–24 (AHIDAGKT), 81–85 (DTPGH), and 135–138 (NKMD) contribute to the GTP site.

The protein belongs to the TRAFAC class translation factor GTPase superfamily. Classic translation factor GTPase family. EF-G/EF-2 subfamily.

Its subcellular location is the cytoplasm. In terms of biological role, catalyzes the GTP-dependent ribosomal translocation step during translation elongation. During this step, the ribosome changes from the pre-translocational (PRE) to the post-translocational (POST) state as the newly formed A-site-bound peptidyl-tRNA and P-site-bound deacylated tRNA move to the P and E sites, respectively. Catalyzes the coordinated movement of the two tRNA molecules, the mRNA and conformational changes in the ribosome. This Rickettsia sibirica (strain ATCC VR-151 / 246) protein is Elongation factor G.